The following is a 420-amino-acid chain: Diaminopimelate decarboxylase (420 aa).

At Lys-54 the chain carries N6-(pyridoxal phosphate)lysine. Position 191 (His-191) interacts with substrate. Pyridoxal 5'-phosphate is bound by residues Gly-227 and 268–271 (EPGR). Residues Arg-271, Arg-307, and Tyr-311 each coordinate substrate. The active-site Proton donor is Cys-342. Residues Glu-343 and Tyr-378 each coordinate substrate. A pyridoxal 5'-phosphate-binding site is contributed by Tyr-378.

Belongs to the Orn/Lys/Arg decarboxylase class-II family. LysA subfamily. Pyridoxal 5'-phosphate serves as cofactor.

It catalyses the reaction meso-2,6-diaminopimelate + H(+) = L-lysine + CO2. The protein operates within amino-acid biosynthesis; L-lysine biosynthesis via DAP pathway; L-lysine from DL-2,6-diaminopimelate: step 1/1. Its activity is regulated as follows. Is activated by 2,3-dimercaptopropan-1-ol. In terms of biological role, specifically catalyzes the decarboxylation of meso-diaminopimelate (meso-DAP) to L-lysine. Is not active against the DD- or LL-isomers of diaminopimelate. The sequence is that of Diaminopimelate decarboxylase from Escherichia coli (strain K12).